Reading from the N-terminus, the 255-residue chain is Accessory gland-specific peptide 26Aa (255 aa).

The first 18 residues, 1–18, serve as a signal peptide directing secretion; that stretch reads MNQILLCSQILLLLFAVA. The segment at 86–110 is disordered; the sequence is PINNSKSRKNSSTLPSQILTDKPNQ. Over residues 87–110 the composition is skewed to polar residues; the sequence is INNSKSRKNSSTLPSQILTDKPNQ. N-linked (GlcNAc...) asparagine glycosylation is found at asparagine 88, asparagine 95, and asparagine 136. Disordered stretches follow at residues 177-197 and 235-255; these read NAQN…KDIA and NNPA…PSTT. The span at 183–192 shows a compositional bias: basic residues; sequence KPTKSCKKRP. Positions 245 to 255 are enriched in polar residues; that stretch reads KSPSEGNPSTT.

In terms of processing, it undergoes several cleavages as it is secreted and it is further processed in the recipient female. Main cells of the accessory glands of males.

The protein resides in the secreted. The protein localises to the extracellular space. Functionally, this protein is transferred from male to female's hemolymph during mating, affecting egglaying and behavior after mating. This Drosophila simulans (Fruit fly) protein is Accessory gland-specific peptide 26Aa (Acp26Aa).